A 203-amino-acid polypeptide reads, in one-letter code: FMN-dependent NADH:quinone oxidoreductase (203 aa).

FMN is bound by residues serine 9, 15–17 (SVS), and 138–141 (SRGG).

The protein belongs to the azoreductase type 1 family. As to quaternary structure, homodimer. Requires FMN as cofactor.

The enzyme catalyses 2 a quinone + NADH + H(+) = 2 a 1,4-benzosemiquinone + NAD(+). It carries out the reaction N,N-dimethyl-1,4-phenylenediamine + anthranilate + 2 NAD(+) = 2-(4-dimethylaminophenyl)diazenylbenzoate + 2 NADH + 2 H(+). Its function is as follows. Quinone reductase that provides resistance to thiol-specific stress caused by electrophilic quinones. Functionally, also exhibits azoreductase activity. Catalyzes the reductive cleavage of the azo bond in aromatic azo compounds to the corresponding amines. The sequence is that of FMN-dependent NADH:quinone oxidoreductase from Methylorubrum populi (strain ATCC BAA-705 / NCIMB 13946 / BJ001) (Methylobacterium populi).